Here is a 247-residue protein sequence, read N- to C-terminus: 2,3-bisphosphoglycerate-dependent phosphoglycerate mutase (247 aa).

Residues 8 to 15 (RHGESQWN), 21 to 22 (TG), Arg60, 87 to 90 (ERHY), Lys98, 114 to 115 (RR), and 183 to 184 (GN) each bind substrate. His9 serves as the catalytic Tele-phosphohistidine intermediate. The active-site Proton donor/acceptor is Glu87.

This sequence belongs to the phosphoglycerate mutase family. BPG-dependent PGAM subfamily.

The catalysed reaction is (2R)-2-phosphoglycerate = (2R)-3-phosphoglycerate. It functions in the pathway carbohydrate degradation; glycolysis; pyruvate from D-glyceraldehyde 3-phosphate: step 3/5. Catalyzes the interconversion of 2-phosphoglycerate and 3-phosphoglycerate. This is 2,3-bisphosphoglycerate-dependent phosphoglycerate mutase from Chlorobium limicola (strain DSM 245 / NBRC 103803 / 6330).